A 68-amino-acid chain; its full sequence is uncharacterized protein (68 aa).

This is an uncharacterized protein from Escherichia coli O6:H1 (strain CFT073 / ATCC 700928 / UPEC).